Consider the following 80-residue polypeptide: Exodeoxyribonuclease 7 small subunit (80 aa).

This sequence belongs to the XseB family. As to quaternary structure, heterooligomer composed of large and small subunits.

The protein localises to the cytoplasm. It catalyses the reaction Exonucleolytic cleavage in either 5'- to 3'- or 3'- to 5'-direction to yield nucleoside 5'-phosphates.. In terms of biological role, bidirectionally degrades single-stranded DNA into large acid-insoluble oligonucleotides, which are then degraded further into small acid-soluble oligonucleotides. The sequence is that of Exodeoxyribonuclease 7 small subunit from Rickettsia africae (strain ESF-5).